The following is a 252-amino-acid chain: Hydroxyacylglutathione hydrolase (252 aa).

The Zn(2+) site is built by His-52, His-54, Asp-56, His-57, His-107, Asp-128, and His-166.

This sequence belongs to the metallo-beta-lactamase superfamily. Glyoxalase II family. In terms of assembly, monomer. Zn(2+) is required as a cofactor.

It catalyses the reaction an S-(2-hydroxyacyl)glutathione + H2O = a 2-hydroxy carboxylate + glutathione + H(+). It participates in secondary metabolite metabolism; methylglyoxal degradation; (R)-lactate from methylglyoxal: step 2/2. Thiolesterase that catalyzes the hydrolysis of S-D-lactoyl-glutathione to form glutathione and D-lactic acid. The chain is Hydroxyacylglutathione hydrolase from Neisseria meningitidis serogroup C / serotype 2a (strain ATCC 700532 / DSM 15464 / FAM18).